The sequence spans 754 residues: Elongation factor G-1, mitochondrial (754 aa).

The transit peptide at 1 to 17 (MARFPTSPAPNRLLRLF) directs the protein to the mitochondrion. Positions 63-340 (DKLRNIGISA…GVVSFLPSPN (278 aa)) constitute a tr-type G domain. GTP-binding positions include 72–79 (AHIDSGKT), 139–143 (DTPGH), and 193–196 (NKLD).

Belongs to the TRAFAC class translation factor GTPase superfamily. Classic translation factor GTPase family. EF-G/EF-2 subfamily. As to expression, expressed in cotyledons and adult leaves at the same levels.

Its subcellular location is the mitochondrion. Its pathway is protein biosynthesis; polypeptide chain elongation. Its function is as follows. Mitochondrial GTPase that catalyzes the GTP-dependent ribosomal translocation step during translation elongation. During this step, the ribosome changes from the pre-translocational (PRE) to the post-translocational (POST) state as the newly formed A-site-bound peptidyl-tRNA and P-site-bound deacylated tRNA move to the P and E sites, respectively. Catalyzes the coordinated movement of the two tRNA molecules, the mRNA and conformational changes in the ribosome. This Arabidopsis thaliana (Mouse-ear cress) protein is Elongation factor G-1, mitochondrial (MEFG1).